The primary structure comprises 500 residues: Aspartyl/glutamyl-tRNA(Asn/Gln) amidotransferase subunit B (500 aa).

This sequence belongs to the GatB/GatE family. GatB subfamily. As to quaternary structure, heterotrimer of A, B and C subunits.

The catalysed reaction is L-glutamyl-tRNA(Gln) + L-glutamine + ATP + H2O = L-glutaminyl-tRNA(Gln) + L-glutamate + ADP + phosphate + H(+). It carries out the reaction L-aspartyl-tRNA(Asn) + L-glutamine + ATP + H2O = L-asparaginyl-tRNA(Asn) + L-glutamate + ADP + phosphate + 2 H(+). Its function is as follows. Allows the formation of correctly charged Asn-tRNA(Asn) or Gln-tRNA(Gln) through the transamidation of misacylated Asp-tRNA(Asn) or Glu-tRNA(Gln) in organisms which lack either or both of asparaginyl-tRNA or glutaminyl-tRNA synthetases. The reaction takes place in the presence of glutamine and ATP through an activated phospho-Asp-tRNA(Asn) or phospho-Glu-tRNA(Gln). The protein is Aspartyl/glutamyl-tRNA(Asn/Gln) amidotransferase subunit B of Rhizobium meliloti (strain 1021) (Ensifer meliloti).